Reading from the N-terminus, the 128-residue chain is Translation initiation factor 5A (128 aa).

Hypusine is present on Lys35.

This sequence belongs to the eIF-5A family.

The protein localises to the cytoplasm. Its function is as follows. Functions by promoting the formation of the first peptide bond. This is Translation initiation factor 5A from Methanosarcina barkeri (strain Fusaro / DSM 804).